The following is a 402-amino-acid chain: UPF0261 protein mll9388 (402 aa).

This sequence belongs to the UPF0261 family.

In Mesorhizobium japonicum (strain LMG 29417 / CECT 9101 / MAFF 303099) (Mesorhizobium loti (strain MAFF 303099)), this protein is UPF0261 protein mll9388.